Here is a 795-residue protein sequence, read N- to C-terminus: ATP-dependent RNA helicase DHX15 (795 aa).

The disordered stretch occupies residues 1-108; that stretch reads MSKRHRLDLG…HSTHAGHAGH (108 aa). Serine 15 carries the phosphoserine modification. Positions 20-62 are enriched in basic and acidic residues; that stretch reads AGTDGKDRDRDRDREDRSKDRDRERDRGDREREREKEKEKELR. Residues 79-108 show a composition bias toward low complexity; that stretch reads ASHSAHSTHSAHSTHSTHSAHSTHAGHAGH. The region spanning 147 to 313 is the Helicase ATP-binding domain; that stretch reads TDILVRHQSF…FDNCPLLTIP (167 aa). An ATP-binding site is contributed by 160 to 167; that stretch reads GETGSGKT. The short motif at 260 to 263 is the DEAH box element; the sequence is DEAH. The Helicase C-terminal domain maps to 338 to 518; the sequence is TVIQIHMCEE…SVVLQLKKLG (181 aa). Lysine 488 is subject to N6-acetyllysine. A Glycyl lysine isopeptide (Lys-Gly) (interchain with G-Cter in SUMO2) cross-link involves residue lysine 786.

This sequence belongs to the DEAD box helicase family. DEAH subfamily. DDX15/PRP43 sub-subfamily. As to quaternary structure, component of the U11/U12 snRNPs that are part of the U12-type spliceosome. Identified in the Intron Large spliceosome complex (IL, also named intron lariat spliceosome), a post-mRNA release spliceosomal complex containing the excised intron, U2, U5 and U6 snRNPs, and splicing factors; the association may be transient. The IL complex exists in two distinct conformations, one with the DHX15 (ILS2) and one without (ILS1). Interacts with TFIP11 (via G-patch domain); indicative for a recruitment to the IL complex. Interacts with SSB/La. Interacts with GPATCH2 (via G-patch domain); promoting the RNA helicase activity. Interacts with NKRF (via G-patch domain); promoting the RNA helicase activity. Interacts with NLRP6. Ubiquitous.

The protein localises to the nucleus. It is found in the nucleolus. It carries out the reaction ATP + H2O = ADP + phosphate + H(+). Its activity is regulated as follows. ATPase activity is enhanced upon binding to G-patch domain-containing proteins. G-patch domain-containing proteins act like a brace that tethers mobile sections of DHX15 together, stabilizing a functional conformation with high RNA affinity, thereby promoting the ATPase activity. RNA helicase involved in mRNA processing and antiviral innate immunity. Pre-mRNA processing factor involved in disassembly of spliceosomes after the release of mature mRNA. In cooperation with TFIP11 seem to be involved in the transition of the U2, U5 and U6 snRNP-containing IL complex to the snRNP-free IS complex leading to efficient debranching and turnover of excised introns. Plays a key role in antiviral innate immunity by promoting both MAVS-dependent signaling and NLRP6 inflammasome. Acts as an RNA virus sensor: recognizes and binds viral double stranded RNA (dsRNA) and activates the MAVS-dependent signaling to produce interferon-beta and interferon lambda-3 (IFNL3). Involved in intestinal antiviral innate immunity together with NLRP6: recognizes and binds viral dsRNA and promotes activation of the NLRP6 inflammasome in intestinal epithelial cells to restrict infection by enteric viruses. The NLRP6 inflammasome acts by promoting maturation and secretion of IL18 in the extracellular milieu. Also involved in antibacterial innate immunity by promoting Wnt-induced antimicrobial protein expression in Paneth cells. The polypeptide is ATP-dependent RNA helicase DHX15 (Homo sapiens (Human)).